The chain runs to 668 residues: Bifunctional polymyxin resistance protein ArnA (668 aa).

A formyltransferase ArnAFT region spans residues 1–307; sequence MSNKAVVFAY…ELGLVDGSLL (307 aa). The active-site Proton donor; for formyltransferase activity is histidine 106. Residues arginine 116 and 138 to 142 each bind (6R)-10-formyltetrahydrofolate; that span reads VKRAD. The dehydrogenase ArnADH stretch occupies residues 317–668; sequence RRTRVLILGV…IADRAKQEAR (352 aa). Residues aspartate 350 and 371 to 372 each bind NAD(+); that span reads DI. Residues alanine 396, tyrosine 401, and 435 to 436 contribute to the UDP-alpha-D-glucuronate site; that span reads TS. Residue glutamate 437 is the Proton acceptor; for decarboxylase activity of the active site. UDP-alpha-D-glucuronate-binding positions include arginine 463, asparagine 494, 528–537, and tyrosine 615; that span reads RLFDGGEQKR. Arginine 621 functions as the Proton donor; for decarboxylase activity in the catalytic mechanism.

This sequence in the N-terminal section; belongs to the Fmt family. UDP-L-Ara4N formyltransferase subfamily. In the C-terminal section; belongs to the NAD(P)-dependent epimerase/dehydratase family. UDP-glucuronic acid decarboxylase subfamily. Homohexamer, formed by a dimer of trimers.

The catalysed reaction is UDP-alpha-D-glucuronate + NAD(+) = UDP-beta-L-threo-pentopyranos-4-ulose + CO2 + NADH. The enzyme catalyses UDP-4-amino-4-deoxy-beta-L-arabinose + (6R)-10-formyltetrahydrofolate = UDP-4-deoxy-4-formamido-beta-L-arabinose + (6S)-5,6,7,8-tetrahydrofolate + H(+). The protein operates within nucleotide-sugar biosynthesis; UDP-4-deoxy-4-formamido-beta-L-arabinose biosynthesis; UDP-4-deoxy-4-formamido-beta-L-arabinose from UDP-alpha-D-glucuronate: step 1/3. It participates in nucleotide-sugar biosynthesis; UDP-4-deoxy-4-formamido-beta-L-arabinose biosynthesis; UDP-4-deoxy-4-formamido-beta-L-arabinose from UDP-alpha-D-glucuronate: step 3/3. Its pathway is bacterial outer membrane biogenesis; lipopolysaccharide biosynthesis. Its function is as follows. Bifunctional enzyme that catalyzes the oxidative decarboxylation of UDP-glucuronic acid (UDP-GlcUA) to UDP-4-keto-arabinose (UDP-Ara4O) and the addition of a formyl group to UDP-4-amino-4-deoxy-L-arabinose (UDP-L-Ara4N) to form UDP-L-4-formamido-arabinose (UDP-L-Ara4FN). The modified arabinose is attached to lipid A and is required for resistance to polymyxin and cationic antimicrobial peptides. In Pseudomonas fluorescens (strain ATCC BAA-477 / NRRL B-23932 / Pf-5), this protein is Bifunctional polymyxin resistance protein ArnA.